We begin with the raw amino-acid sequence, 1007 residues long: Rho-type GTPase-activating protein 1 (1007 aa).

LIM zinc-binding domains follow at residues 13 to 66 (CVRC…CFDC) and 70 to 122 (CKNC…CLSC). Disordered stretches follow at residues 203-293 (ITGY…KSPS), 401-478 (EKYS…STSL), and 505-600 (KETA…NDPS). Residues 212-221 (NSGSSKFGSN) show a composition bias toward low complexity. Polar residues-rich tracts occupy residues 250–261 (ANMSLNVATDPT) and 270–293 (HSRNLLNKTPLRNSSGQYLAKSPS). The residue at position 278 (threonine 278) is a Phosphothreonine. A Phosphoserine modification is found at serine 291. Positions 411–421 (KGRKISRSLSR) are enriched in basic residues. Residues 454-466 (RSQDLMRDNDSHT) show a composition bias toward basic and acidic residues. Composition is skewed to polar residues over residues 467–478 (GLDTPNSNSTSL) and 529–579 (SPAT…LENS). Threonine 532 bears the Phosphothreonine mark. Residues 583–600 (EEQKETLYENSESRNDPS) are compositionally biased toward basic and acidic residues. In terms of domain architecture, Rho-GAP spans 791–1006 (SSLVARCNYE…FIFGNYKDIL (216 aa)).

Its function is as follows. GTPase-activating protein (GAP) for CDC42 and/or RHO1. Negative regulator of the pheromone-response pathway through the STE20 protein kinase; acts at a step between the G-protein and the MAP kinase module. Dominant suppressor of bud emergence defect caused by deletion of IPL2/BEM2. Involved in the control of polarized cell growth and proper bud site selection. This chain is Rho-type GTPase-activating protein 1 (RGA1), found in Saccharomyces cerevisiae (strain ATCC 204508 / S288c) (Baker's yeast).